The following is a 32-amino-acid chain: Delta-conotoxin-like CnVIC (32 aa).

3 disulfide bridges follow: Cys3-Cys18, Cys10-Cys22, and Cys17-Cys27. A 4-hydroxyproline mark is found at Pro6 and Pro14.

Belongs to the conotoxin O1 superfamily. In terms of tissue distribution, expressed by the venom duct.

It is found in the secreted. Functionally, delta-conotoxins bind to site 6 of voltage-gated sodium channels (Nav) and inhibit the inactivation process. This toxin acts on Nav1.2/SCN2A, Nav1.4/SCN4A, Nav1.5/SCN5A (weak activity), Nav1.6/SCN8A (EC(50)=2.5 uM). This chain is Delta-conotoxin-like CnVIC, found in Conus consors (Singed cone).